We begin with the raw amino-acid sequence, 468 residues long: Phosphoglucosamine mutase (468 aa).

Catalysis depends on serine 112, which acts as the Phosphoserine intermediate. Positions 112, 254, 256, and 258 each coordinate Mg(2+). Serine 112 bears the Phosphoserine mark.

The protein belongs to the phosphohexose mutase family. Mg(2+) is required as a cofactor. Post-translationally, activated by phosphorylation.

The catalysed reaction is alpha-D-glucosamine 1-phosphate = D-glucosamine 6-phosphate. Its function is as follows. Catalyzes the conversion of glucosamine-6-phosphate to glucosamine-1-phosphate. The chain is Phosphoglucosamine mutase from Prochlorococcus marinus (strain MIT 9303).